Reading from the N-terminus, the 640-residue chain is 1-deoxy-D-xylulose-5-phosphate synthase (640 aa).

Thiamine diphosphate contacts are provided by residues H79 and 120–122 (GHS). D151 provides a ligand contact to Mg(2+). Thiamine diphosphate-binding positions include 152-153 (GG), N180, Y288, and E372. N180 serves as a coordination point for Mg(2+).

It belongs to the transketolase family. DXPS subfamily. As to quaternary structure, homodimer. It depends on Mg(2+) as a cofactor. Thiamine diphosphate serves as cofactor.

It catalyses the reaction D-glyceraldehyde 3-phosphate + pyruvate + H(+) = 1-deoxy-D-xylulose 5-phosphate + CO2. The protein operates within metabolic intermediate biosynthesis; 1-deoxy-D-xylulose 5-phosphate biosynthesis; 1-deoxy-D-xylulose 5-phosphate from D-glyceraldehyde 3-phosphate and pyruvate: step 1/1. Catalyzes the acyloin condensation reaction between C atoms 2 and 3 of pyruvate and glyceraldehyde 3-phosphate to yield 1-deoxy-D-xylulose-5-phosphate (DXP). This is 1-deoxy-D-xylulose-5-phosphate synthase from Nitrosococcus oceani (strain ATCC 19707 / BCRC 17464 / JCM 30415 / NCIMB 11848 / C-107).